We begin with the raw amino-acid sequence, 421 residues long: 4-hydroxy-3-methylbut-2-en-1-yl diphosphate synthase (flavodoxin) (421 aa).

4 residues coordinate [4Fe-4S] cluster: cysteine 311, cysteine 314, cysteine 357, and glutamate 364.

This sequence belongs to the IspG family. [4Fe-4S] cluster serves as cofactor.

It catalyses the reaction (2E)-4-hydroxy-3-methylbut-2-enyl diphosphate + oxidized [flavodoxin] + H2O + 2 H(+) = 2-C-methyl-D-erythritol 2,4-cyclic diphosphate + reduced [flavodoxin]. Its pathway is isoprenoid biosynthesis; isopentenyl diphosphate biosynthesis via DXP pathway; isopentenyl diphosphate from 1-deoxy-D-xylulose 5-phosphate: step 5/6. Functionally, converts 2C-methyl-D-erythritol 2,4-cyclodiphosphate (ME-2,4cPP) into 1-hydroxy-2-methyl-2-(E)-butenyl 4-diphosphate. The protein is 4-hydroxy-3-methylbut-2-en-1-yl diphosphate synthase (flavodoxin) of Stenotrophomonas maltophilia (strain K279a).